The primary structure comprises 451 residues: Target of rapamycin complex 1 subunit tco89 (451 aa).

Residues 1–35 are disordered; that stretch reads MERPSLSRRTSSSTVSTDGEGVYSRSTKERKRNFI. Positions 7–17 are enriched in low complexity; the sequence is SRRTSSSTVST. Ser70 is subject to Phosphoserine. Disordered stretches follow at residues 122–164, 176–264, and 362–437; these read WDDA…PVTR, INSN…GNSL, and NQNF…DTDY. Residues 129 to 162 are compositionally biased toward polar residues; the sequence is NDSTAGNLDSDSALPTPSVTTNEAADSSRASSPV. Positions 203–215 are enriched in low complexity; the sequence is DDSAADASTTKSS. 3 stretches are compositionally biased toward polar residues: residues 228–242, 362–376, and 407–417; these read HSNNREVTQATNQPK, NQNFDSQNAFNTSAA, and QSASLNASMSA. The segment covering 419–430 has biased composition (basic residues); that stretch reads SHARQRSIHVPK.

The protein belongs to the TORC subunit TCO89 family. As to quaternary structure, the target of rapamycin complex 1 (TORC1) is composed of at least mip1, pop3/wat1, tco89, toc1 and tor2. Post-translationally, either Thr-10, Ser-11, Ser-12, Ser-13 or Thr-14 and Ser-214 or Ser-215 and Ser-247 or Ser-249 are phosphorylated as well.

The protein localises to the cytoplasm. Component of TORC1, which regulates multiple cellular processes to control cell growth in response to environmental signals. Tor2 is essential for growth. Nutrient limitation and environmental stress signals cause inactivation of TORC1. Active TORC1 positively controls cell growth and ribosome biogenesis by regulating ribosomal protein gene expression. TORC1 negatively controls G1 cell-cycle arrest, sexual development and amino acid uptake. Represses mating, meiosis and sporulation efficiency by interfering with the functions of the transcription factor ste11 and the meiosis-promoting RNA-binding protein mei2. The chain is Target of rapamycin complex 1 subunit tco89 from Schizosaccharomyces pombe (strain 972 / ATCC 24843) (Fission yeast).